Here is a 323-residue protein sequence, read N- to C-terminus: Phospho-N-acetylmuramoyl-pentapeptide-transferase (323 aa).

9 helical membrane passes run 12–32 (IVMA…IIIP), 58–78 (PTIG…VMVG), 84–104 (AMIA…DDLL), 120–140 (MILL…YIGT), 151–171 (INLG…VTNA), 177–197 (GLDG…GIIS), 200–220 (LGHI…LAFL), 229–250 (VFMG…ALIL), and 303–323 (KIVS…FASL).

Belongs to the glycosyltransferase 4 family. MraY subfamily. Mg(2+) is required as a cofactor.

The protein resides in the cell membrane. The enzyme catalyses UDP-N-acetyl-alpha-D-muramoyl-L-alanyl-gamma-D-glutamyl-meso-2,6-diaminopimeloyl-D-alanyl-D-alanine + di-trans,octa-cis-undecaprenyl phosphate = di-trans,octa-cis-undecaprenyl diphospho-N-acetyl-alpha-D-muramoyl-L-alanyl-D-glutamyl-meso-2,6-diaminopimeloyl-D-alanyl-D-alanine + UMP. The protein operates within cell wall biogenesis; peptidoglycan biosynthesis. Its function is as follows. Catalyzes the initial step of the lipid cycle reactions in the biosynthesis of the cell wall peptidoglycan: transfers peptidoglycan precursor phospho-MurNAc-pentapeptide from UDP-MurNAc-pentapeptide onto the lipid carrier undecaprenyl phosphate, yielding undecaprenyl-pyrophosphoryl-MurNAc-pentapeptide, known as lipid I. This chain is Phospho-N-acetylmuramoyl-pentapeptide-transferase, found in Clostridium perfringens (strain SM101 / Type A).